The primary structure comprises 392 residues: Outer membrane protein assembly factor BamB (392 aa).

Residues 1–19 (MQLRKLLLPGLLSVTLLSG) form the signal peptide. C20 carries N-palmitoyl cysteine lipidation. Residue C20 is the site of S-diacylglycerol cysteine attachment.

The protein belongs to the BamB family. In terms of assembly, part of the Bam complex, which is composed of the outer membrane protein BamA, and four lipoproteins BamB, BamC, BamD and BamE. Monomer. Interacts directly with BamA. The Bam complex has the shape of a hat, with the BamA beta-barrel crown in the outer membrane and the periplasmic brim formed by the BamA POTRA domains and the 4 lipoproteins.

The protein localises to the cell outer membrane. Functionally, part of the outer membrane protein assembly complex (Bam), which is involved in assembly and insertion of beta-barrel proteins into the outer membrane. Nonessential member of the complex, which may orient the flexible periplasmic domain of BamA for interaction with other Bam components, chaperones and nascent outer membrane proteins. Efficient substrate folding and insertion into the outer membrane requires all 5 subunits. A lateral gate may open between the first and last strands of the BamA beta-barrel that allows substrate to insert into the outer membrane; comparison of the structures of complete and nearly complete Bam complexes show there is considerable movement of all 5 proteins. In Escherichia coli (strain K12), this protein is Outer membrane protein assembly factor BamB.